The following is a 248-amino-acid chain: Coproheme decarboxylase (248 aa).

Fe-coproporphyrin III-binding positions include R130, 144-148 (YPMDK), H171, Q184, and S222. The active site involves Y144.

It belongs to the ChdC family. Type 1 subfamily. Requires Fe-coproporphyrin III as cofactor.

The enzyme catalyses Fe-coproporphyrin III + 2 H2O2 + 2 H(+) = heme b + 2 CO2 + 4 H2O. It catalyses the reaction Fe-coproporphyrin III + H2O2 + H(+) = harderoheme III + CO2 + 2 H2O. It carries out the reaction harderoheme III + H2O2 + H(+) = heme b + CO2 + 2 H2O. It functions in the pathway porphyrin-containing compound metabolism; protoheme biosynthesis. In terms of biological role, involved in coproporphyrin-dependent heme b biosynthesis. Catalyzes the decarboxylation of Fe-coproporphyrin III (coproheme) to heme b (protoheme IX), the last step of the pathway. The reaction occurs in a stepwise manner with a three-propionate intermediate. In Geobacillus sp. (strain WCH70), this protein is Coproheme decarboxylase.